The chain runs to 218 residues: tRNA (guanine-N(7)-)-methyltransferase (218 aa).

4 residues coordinate S-adenosyl-L-methionine: Glu43, Asp68, Glu101, and Asn124. Substrate contacts are provided by Lys128 and Asp160.

This sequence belongs to the class I-like SAM-binding methyltransferase superfamily. TrmB family.

The catalysed reaction is guanosine(46) in tRNA + S-adenosyl-L-methionine = N(7)-methylguanosine(46) in tRNA + S-adenosyl-L-homocysteine. It participates in tRNA modification; N(7)-methylguanine-tRNA biosynthesis. Its function is as follows. Catalyzes the formation of N(7)-methylguanine at position 46 (m7G46) in tRNA. In Acetivibrio thermocellus (strain ATCC 27405 / DSM 1237 / JCM 9322 / NBRC 103400 / NCIMB 10682 / NRRL B-4536 / VPI 7372) (Clostridium thermocellum), this protein is tRNA (guanine-N(7)-)-methyltransferase.